The chain runs to 533 residues: Glycogen synthase (533 aa).

K12 is a binding site for ADP-alpha-D-glucose. The interval 497–533 is disordered; that stretch reads AALARADAASGRRRRAPEQSERLRQERLARQVALASK. Positions 512–525 are enriched in basic and acidic residues; it reads APEQSERLRQERLA.

Belongs to the glycosyltransferase 1 family. Bacterial/plant glycogen synthase subfamily.

It catalyses the reaction [(1-&gt;4)-alpha-D-glucosyl](n) + ADP-alpha-D-glucose = [(1-&gt;4)-alpha-D-glucosyl](n+1) + ADP + H(+). The protein operates within glycan biosynthesis; glycogen biosynthesis. Functionally, synthesizes alpha-1,4-glucan chains using ADP-glucose. The sequence is that of Glycogen synthase from Burkholderia thailandensis (strain ATCC 700388 / DSM 13276 / CCUG 48851 / CIP 106301 / E264).